The chain runs to 410 residues: Cytohesin-2 (410 aa).

Positions 13-56 form a coiled coil; that stretch reads PEERMELENIRRRKQELLVEIQRLREELSEAMSEVEGLEANEGS. In terms of domain architecture, SEC7 spans 54–241; the sequence is EGSKTLQRNR…RNLYDSIRNE (188 aa). One can recognise a PH domain in the interval 259-386; that stretch reads NPDREGWLLK…WIKSIQAAVS (128 aa). A 1,2-diacyl-sn-glycero-3-phospho-(1D-myo-inositol-3,4,5-trisphosphate)-binding positions include 268–271, arginine 290, tyrosine 301, arginine 311, lysine 349, asparagine 360, and histidine 361; that span reads KLGA. The interval 397–405 is C-terminal autoinhibitory region; it reads RKKRISVKK.

Heteromer. Composed of TAMALIN, CYTH2 and at least one GRM1. Interacts with ARRB1. Interacts with ARL4D; the interaction is direct. Directly interacts with CCDC120 through the coiled coil domain; this interaction stabilizes CCDC120, possibly by preventing its ubiquitination, and is required for neurite growth in neuroblastoma cells. Interacts (via N-terminal domain) with INAVA (via N-terminal domain).

It is found in the cell membrane. It localises to the cytoplasm. The protein resides in the cell projection. Its subcellular location is the growth cone. In terms of biological role, acts as a guanine-nucleotide exchange factor (GEF). Promotes guanine-nucleotide exchange on ARF1, ARF3 and ARF6. Promotes the activation of ARF factors through replacement of GDP with GTP. The cell membrane form, in association with ARL4 proteins, recruits ARF6 to the plasma membrane. Involved in neurite growth. This is Cytohesin-2 (CYTH2) from Bos taurus (Bovine).